The sequence spans 220 residues: 7-cyano-7-deazaguanine synthase (220 aa).

An ATP-binding site is contributed by 10 to 20 (FSGGQDSTTCL). The Zn(2+) site is built by cysteine 188, cysteine 197, cysteine 200, and cysteine 203.

Belongs to the QueC family. Zn(2+) is required as a cofactor.

It carries out the reaction 7-carboxy-7-deazaguanine + NH4(+) + ATP = 7-cyano-7-deazaguanine + ADP + phosphate + H2O + H(+). Its pathway is purine metabolism; 7-cyano-7-deazaguanine biosynthesis. Its function is as follows. Catalyzes the ATP-dependent conversion of 7-carboxy-7-deazaguanine (CDG) to 7-cyano-7-deazaguanine (preQ(0)). This Neisseria meningitidis serogroup C (strain 053442) protein is 7-cyano-7-deazaguanine synthase.